A 158-amino-acid chain; its full sequence is NAD(P)H-quinone oxidoreductase subunit J, chloroplastic (158 aa).

It belongs to the complex I 30 kDa subunit family. In terms of assembly, NDH is composed of at least 16 different subunits, 5 of which are encoded in the nucleus.

Its subcellular location is the plastid. It localises to the chloroplast thylakoid membrane. The catalysed reaction is a plastoquinone + NADH + (n+1) H(+)(in) = a plastoquinol + NAD(+) + n H(+)(out). It carries out the reaction a plastoquinone + NADPH + (n+1) H(+)(in) = a plastoquinol + NADP(+) + n H(+)(out). Its function is as follows. NDH shuttles electrons from NAD(P)H:plastoquinone, via FMN and iron-sulfur (Fe-S) centers, to quinones in the photosynthetic chain and possibly in a chloroplast respiratory chain. The immediate electron acceptor for the enzyme in this species is believed to be plastoquinone. Couples the redox reaction to proton translocation, and thus conserves the redox energy in a proton gradient. This is NAD(P)H-quinone oxidoreductase subunit J, chloroplastic from Piper cenocladum (Ant piper).